Consider the following 976-residue polypeptide: Probable outer membrane protein PmpA (976 aa).

Residues 1–50 (MNQVIKTIALCYQKYISRASNKTFSIHNTLSLSLLPKCLLGSLIIYTSHA) form the signal peptide. One can recognise an Autotransporter domain in the interval 671 to 976 (GNAIPNSLWS…SLSCGGYVGF (306 aa)).

This sequence belongs to the PMP outer membrane protein family.

Its subcellular location is the secreted. The protein localises to the cell wall. The protein resides in the cell outer membrane. This Chlamydia muridarum (strain MoPn / Nigg) protein is Probable outer membrane protein PmpA (pmpA).